Consider the following 469-residue polypeptide: Sorting and assembly machinery component 50 homolog (469 aa).

Residues Val45 to Leu125 enclose the POTRA domain. Lys255 bears the N6-methyllysine mark.

This sequence belongs to the SAM50/omp85 family. Associates with the mitochondrial contact site and cristae organizing system (MICOS) complex, composed of at least MICOS10/MIC10, CHCHD3/MIC19, CHCHD6/MIC25, APOOL/MIC27, IMMT/MIC60, APOO/MIC23/MIC26 and QIL1/MIC13. This complex was also known under the names MINOS or MitOS complex. The MICOS complex associates with mitochondrial outer membrane proteins SAMM50, MTX1 and MTX2 (together described as components of the mitochondrial outer membrane sorting assembly machinery (SAM) complex) and DNAJC11, mitochondrial inner membrane protein TMEM11 and with HSPA9. The MICOS and SAM complexes together with DNAJC11 are part of a large protein complex spanning both membranes termed the mitochondrial intermembrane space bridging (MIB) complex. Interacts with IMMT/MIC60. Interacts with CHCHD3/MIC19. Interacts with ARMC1.

The protein localises to the mitochondrion outer membrane. It localises to the cytoplasm. The protein resides in the mitochondrion. Functionally, plays a crucial role in the maintenance of the structure of mitochondrial cristae and the proper assembly of the mitochondrial respiratory chain complexes. Required for the assembly of TOMM40 into the TOM complex. In Bos taurus (Bovine), this protein is Sorting and assembly machinery component 50 homolog (SAMM50).